The primary structure comprises 394 residues: Na(+)/H(+) antiporter NhaA (394 aa).

11 consecutive transmembrane segments (helical) span residues 14–34, 59–79, 95–115, 125–145, 154–174, 179–199, 213–233, 254–274, 292–312, 328–348, and 363–383; these read AGGL…NSAL, LLLW…GLEV, VFPA…YLLF, GWAI…ALLG, VFLL…IALF, VSLQ…YMNW, LVLW…GVIV, GLHP…NAGV, IATG…WLAV, IFAV…IASL, and LGIL…LRLV.

This sequence belongs to the NhaA Na(+)/H(+) (TC 2.A.33) antiporter family.

It is found in the cell inner membrane. The enzyme catalyses Na(+)(in) + 2 H(+)(out) = Na(+)(out) + 2 H(+)(in). Functionally, na(+)/H(+) antiporter that extrudes sodium in exchange for external protons. This Yersinia pseudotuberculosis serotype O:1b (strain IP 31758) protein is Na(+)/H(+) antiporter NhaA.